A 249-amino-acid chain; its full sequence is Probable calcium-binding protein CML12 (249 aa).

The span at 1-24 (MQSQRERPREDRVHEETRGADHAH) shows a compositional bias: basic and acidic residues. A disordered region spans residues 1–80 (MQSQRERPRE…RKGKAPATAE (80 aa)). Low complexity predominate over residues 30-56 (AAAAASATATETATRTMSLHAGGVVVV). The span at 57-70 (DGKEKGKKEEGEGK) shows a compositional bias: basic and acidic residues. EF-hand domains are found at residues 91–126 (EQLR…LGLR), 128–163 (AAGD…LILG), 171–206 (VDQA…MGHP), and 207–242 (ICYA…SALD). Residues Asp-104, Asp-106, Asp-108, Ser-110, Glu-115, Asp-141, Asp-143, Asn-145, Thr-147, Glu-152, Asp-184, Asp-186, Asn-188, Glu-195, Asp-220, Asp-222, Asp-224, and Glu-231 each coordinate Ca(2+).

In terms of biological role, potential calcium sensor. The polypeptide is Probable calcium-binding protein CML12 (CML12) (Oryza sativa subsp. japonica (Rice)).